A 349-amino-acid chain; its full sequence is MKVGIVSWGAYIPKYRIRTEEVARIWGDDPLRIVDVYLVDEKSVEGIDEDAVTIAVEAARRAIRRAGIDPKKIGAVYAGTESKPYAVKPISSILVDALGLSNNVFAVDMEFACKAGSEGLVAAIGLVKAGQVEYGMTVGTDTSQGEPGEHLEYSASSGGVALIVGRDGVAAELEAVYSYVSDTPDFWRREGSPYPMHGEGFTGEPAYFRHIIGAAKGLMEKYGYKPSDFAYVVFHQPNGRFPVRAASMLNIPMEKIKPGIVVTHIGNTYNASALMGFAKVLDVAKPGDKILLVPFGSGAGSNAFVFTVTDVVQERQKTGVPTVEDMLRDKIYVDYAQYLKMRKMIKLFD.

Asp29 is a binding site for (3S)-3-hydroxy-3-methylglutaryl-CoA. Catalysis depends on Glu81, which acts as the Proton donor/acceptor. 4 residues coordinate (3S)-3-hydroxy-3-methylglutaryl-CoA: Cys113, Ser154, Thr202, and His235. The active-site Acyl-thioester intermediate is Cys113. The active-site Proton donor/acceptor is the His235. Arg240 contributes to the CoA binding site. (3S)-3-hydroxy-3-methylglutaryl-CoA contacts are provided by Arg244, Asn267, and Ser297.

This sequence belongs to the thiolase-like superfamily. Archaeal HMG-CoA synthase family. In terms of assembly, interacts with acetoacetyl-CoA thiolase that catalyzes the precedent step in the pathway and with a DUF35 protein. The acetoacetyl-CoA thiolase/HMG-CoA synthase complex channels the intermediate via a fused CoA-binding site, which allows for efficient coupling of the endergonic thiolase reaction with the exergonic HMGCS reaction.

The catalysed reaction is acetoacetyl-CoA + acetyl-CoA + H2O = (3S)-3-hydroxy-3-methylglutaryl-CoA + CoA + H(+). The protein operates within metabolic intermediate biosynthesis; (R)-mevalonate biosynthesis; (R)-mevalonate from acetyl-CoA: step 2/3. Its function is as follows. Catalyzes the condensation of acetyl-CoA with acetoacetyl-CoA to form 3-hydroxy-3-methylglutaryl-CoA (HMG-CoA). Functions in the mevalonate (MVA) pathway leading to isopentenyl diphosphate (IPP), a key precursor for the biosynthesis of isoprenoid compounds that are building blocks of archaeal membrane lipids. This chain is Hydroxymethylglutaryl-CoA synthase, found in Pyrobaculum arsenaticum (strain DSM 13514 / JCM 11321 / PZ6).